Here is a 335-residue protein sequence, read N- to C-terminus: MRN complex-interacting protein (335 aa).

2 disordered regions span residues 75–102 (EEAVNGSEEENAGPLQAEAGSQQAPSKP) and 118–194 (QELD…ALST). Ser100 carries the post-translational modification Phosphoserine. Over residues 129–142 (TQLSTSAERPSSPA) the composition is skewed to polar residues. Residues 145–148 (RKRK) carry the Nuclear localization signal (NLS) motif. Polar residues predominate over residues 177 to 194 (STGLFGTEQQGTSPALST). The tract at residues 203-230 (FPRWKLPSPVTQVNAPSSKWARFLLAPG) is necessary for the association with the MRN complex. The segment at 273–335 (RPPQAIHTTT…TTGEDFDDDL (63 aa)) is disordered. The segment covering 286 to 297 (DRPDRKTREQPR) has biased composition (basic and acidic residues).

It belongs to the MRNIP family. In terms of assembly, associates with the MRE11-RAD50-NBN (MRN) damage-sensing complex; this association is constitutive. Interacts with MRE11. Interacts with NBN. Interacts with RAD50. Post-translationally, phosphorylated; phosphorylation is constitutive and occurs in the absence of any DNA-damaging stimulus. Phosphorylation is necessary for its nuclear retention.

Its subcellular location is the nucleus. The protein resides in the nucleoplasm. Functionally, plays a role in the cellular response to DNA damage and the maintenance of genome stability through its association with the MRN damage-sensing complex. Promotes chromatin loading and activity of the MRN complex to facilitate subsequent ATM-mediated DNA damage response signaling and DNA repair. In Mus musculus (Mouse), this protein is MRN complex-interacting protein.